Here is a 339-residue protein sequence, read N- to C-terminus: MYALIRKALFSLDAEQAHDLTIKTLKTLGRSPFNPLLKTLFACPTGSPKTIMGLHFKNPIGLAAGADKNGEAIEGFAAMGFGFIEVGTVTPLAQEGNPKPRQFRLPEAEGIINRNGFNNYGIDYLIENVKHANYDGILGINIGKNTFTSVENGKADYLICLNKAYHYADYITINISSPNSPGLRQLQYGEALEDLLQGVKARQKDLAEQYQKYVPIAVKIAPDLTEGEVVQIADTLQRHKMDAVIATNTTISRDTVSGLQNAEQQGGLSGKPLQQKSTEIIARLHQELKGQIPIIGSGGIDSVANAQEKIKAGAELLQLYSGLIYHGPHLIKQLVQQIK.

Residues 64–68 (AGADK) and Thr-88 contribute to the FMN site. Lys-68 lines the substrate pocket. 113–117 (NRNGF) lines the substrate pocket. FMN contacts are provided by Asn-141 and Asn-174. Substrate is bound at residue Asn-174. Ser-177 functions as the Nucleophile in the catalytic mechanism. Residue Asn-179 participates in substrate binding. Residues Lys-219 and Thr-247 each coordinate FMN. 248 to 249 (NT) provides a ligand contact to substrate. FMN contacts are provided by residues Gly-270, Gly-299, and 320–321 (YS).

It belongs to the dihydroorotate dehydrogenase family. Type 2 subfamily. As to quaternary structure, monomer. FMN is required as a cofactor.

It localises to the cell membrane. The enzyme catalyses (S)-dihydroorotate + a quinone = orotate + a quinol. The protein operates within pyrimidine metabolism; UMP biosynthesis via de novo pathway; orotate from (S)-dihydroorotate (quinone route): step 1/1. Its function is as follows. Catalyzes the conversion of dihydroorotate to orotate with quinone as electron acceptor. The polypeptide is Dihydroorotate dehydrogenase (quinone) (pyrD) (Pasteurella multocida (strain Pm70)).